Here is a 65-residue protein sequence, read N- to C-terminus: Large ribosomal subunit protein bL35 (65 aa).

Residues 1–26 (MPKIKTHRGAAKRFSKTGTGKIKRSH) are compositionally biased toward basic residues. The segment at 1–41 (MPKIKTHRGAAKRFSKTGTGKIKRSHAFTSHILTSKTRKNK) is disordered.

It belongs to the bacterial ribosomal protein bL35 family.

This chain is Large ribosomal subunit protein bL35, found in Geotalea daltonii (strain DSM 22248 / JCM 15807 / FRC-32) (Geobacter daltonii).